Here is a 425-residue protein sequence, read N- to C-terminus: Protein CLP1 homolog (425 aa).

ATP contacts are provided by residues E18, K59, and 121 to 126; that span reads DVGKST.

Belongs to the Clp1 family. Clp1 subfamily.

It localises to the nucleus. Required for endonucleolytic cleavage during polyadenylation-dependent pre-mRNA 3'-end formation. This is Protein CLP1 homolog (cbc) from Drosophila persimilis (Fruit fly).